Reading from the N-terminus, the 172-residue chain is Translation initiation factor IF-3 (172 aa).

This sequence belongs to the IF-3 family. As to quaternary structure, monomer.

Its subcellular location is the cytoplasm. Its function is as follows. IF-3 binds to the 30S ribosomal subunit and shifts the equilibrium between 70S ribosomes and their 50S and 30S subunits in favor of the free subunits, thus enhancing the availability of 30S subunits on which protein synthesis initiation begins. This Campylobacter fetus subsp. fetus (strain 82-40) protein is Translation initiation factor IF-3.